The chain runs to 350 residues: MPVLHNRISNDELKAKMLAESEPRTTISFYKYFTIASPQQTRDALYQVFTALDVFGRVYLAHEGINAQISVPQSKVETFRQQLYTFDPALDGLRLNIALEDDGKSFWVLRMKVRDRIVADGIDDPTFDASNVGDYLKAADVNAMLDDPDAVFIDMRNHYEYEVGHFENALEIPADTFREQLPKAVEMLREHADKKIVMYCTGGIRCEKASAWMKHNGFNKVWHIEGGIIEYARRAREQGLPVRFIGKNFVFDERMGERISDEVIAHCHQCGAPCDSHTNCKNDGCHLLFIQCPQCASKFNGCCSEQCCEELALPEEEQRRRRAGRENGNKIFNKSRGRLNSKLSIPDPAE.

A Rhodanese domain is found at 146-240 (DDPDAVFIDM…YARRAREQGL (95 aa)). Cysteine 200 (cysteine persulfide intermediate) is an active-site residue. Basic and acidic residues predominate over residues 319-328 (RRRRAGRENG). Residues 319–350 (RRRRAGRENGNKIFNKSRGRLNSKLSIPDPAE) are disordered.

This sequence belongs to the TrhO family.

The catalysed reaction is uridine(34) in tRNA + AH2 + O2 = 5-hydroxyuridine(34) in tRNA + A + H2O. In terms of biological role, catalyzes oxygen-dependent 5-hydroxyuridine (ho5U) modification at position 34 in tRNAs. The chain is tRNA uridine(34) hydroxylase from Salmonella dublin (strain CT_02021853).